Reading from the N-terminus, the 87-residue chain is Probable Fe(2+)-trafficking protein (87 aa).

The protein belongs to the Fe(2+)-trafficking protein family. In terms of assembly, monomer.

Its function is as follows. Could be a mediator in iron transactions between iron acquisition and iron-requiring processes, such as synthesis and/or repair of Fe-S clusters in biosynthetic enzymes. The chain is Probable Fe(2+)-trafficking protein from Buchnera aphidicola subsp. Baizongia pistaciae (strain Bp).